The sequence spans 97 residues: Large ribosomal subunit protein uL23 (97 aa).

The protein belongs to the universal ribosomal protein uL23 family. Part of the 50S ribosomal subunit. Contacts protein L29, and trigger factor when it is bound to the ribosome.

In terms of biological role, one of the early assembly proteins it binds 23S rRNA. One of the proteins that surrounds the polypeptide exit tunnel on the outside of the ribosome. Forms the main docking site for trigger factor binding to the ribosome. The chain is Large ribosomal subunit protein uL23 from Brucella suis (strain ATCC 23445 / NCTC 10510).